Reading from the N-terminus, the 444-residue chain is Xylose isomerase (444 aa).

Active-site residues include H101 and D104. Mg(2+)-binding residues include E232, E268, H271, D296, D307, D309, and D339.

This sequence belongs to the xylose isomerase family. As to quaternary structure, homotetramer. Mg(2+) serves as cofactor.

It localises to the cytoplasm. The catalysed reaction is alpha-D-xylose = alpha-D-xylulofuranose. This Thermotoga maritima (strain ATCC 43589 / DSM 3109 / JCM 10099 / NBRC 100826 / MSB8) protein is Xylose isomerase.